A 323-amino-acid polypeptide reads, in one-letter code: V-type ATP synthase subunit C (323 aa).

It belongs to the V-ATPase V0D/AC39 subunit family.

In terms of biological role, produces ATP from ADP in the presence of a proton gradient across the membrane. The protein is V-type ATP synthase subunit C of Thermus thermophilus (strain ATCC BAA-163 / DSM 7039 / HB27).